The chain runs to 699 residues: Polyribonucleotide nucleotidyltransferase (699 aa).

Mg(2+)-binding residues include Asp-485 and Asp-491. One can recognise a KH domain in the interval 552–611 (PRITTIKINPEKIRDVIGKGGAVIRALTEETGTTIELEDDGTVKIASSNGEATKEAIRRI). Residues 621–689 (GRIYNGKVIR…RQGRVRLSIK (69 aa)) enclose the S1 motif domain.

The protein belongs to the polyribonucleotide nucleotidyltransferase family. Component of the RNA degradosome, which is a multiprotein complex involved in RNA processing and mRNA degradation. Mg(2+) is required as a cofactor.

It is found in the cytoplasm. The enzyme catalyses RNA(n+1) + phosphate = RNA(n) + a ribonucleoside 5'-diphosphate. Functionally, involved in mRNA degradation. Catalyzes the phosphorolysis of single-stranded polyribonucleotides processively in the 3'- to 5'-direction. In Shewanella sp. (strain MR-7), this protein is Polyribonucleotide nucleotidyltransferase.